Here is a 280-residue protein sequence, read N- to C-terminus: Ribosomal RNA-processing protein 7 homolog A (280 aa).

In terms of domain architecture, RRM spans R59–Y159. S99 is modified (phosphoserine).

Belongs to the RRP7 family. Part of the small subunit (SSU) processome, composed of more than 70 proteins and the RNA chaperone small nucleolar RNA (snoRNA) U3. Interacts with NOL6; required for NOL6 localization to nucleolus.

It localises to the nucleus. It is found in the nucleolus. Its subcellular location is the cell projection. The protein resides in the cilium. The protein localises to the cytoplasm. It localises to the cytoskeleton. It is found in the microtubule organizing center. Its subcellular location is the centrosome. In terms of biological role, nucleolar protein that is involved in ribosomal RNA (rRNA) processing. Also plays a role in primary cilia resorption, and cell cycle progression in neurogenesis and neocortex development. Part of the small subunit (SSU) processome, first precursor of the small eukaryotic ribosomal subunit. During the assembly of the SSU processome in the nucleolus, many ribosome biogenesis factors, an RNA chaperone and ribosomal proteins associate with the nascent pre-rRNA and work in concert to generate RNA folding, modifications, rearrangements and cleavage as well as targeted degradation of pre-ribosomal RNA by the RNA exosome. The polypeptide is Ribosomal RNA-processing protein 7 homolog A (RRP7A) (Pongo abelii (Sumatran orangutan)).